The sequence spans 601 residues: NADH-quinone oxidoreductase subunit C/D (601 aa).

The segment at 1–191 is NADH dehydrogenase I subunit C; the sequence is MKLTRDFPSN…DPFMLDAAKQ (191 aa). The NADH dehydrogenase I subunit D stretch occupies residues 215 to 601; the sequence is DYMFLNLGPN…IDFVMSDVDR (387 aa).

In the N-terminal section; belongs to the complex I 30 kDa subunit family. It in the C-terminal section; belongs to the complex I 49 kDa subunit family. In terms of assembly, NDH-1 is composed of 13 different subunits. Subunits NuoB, CD, E, F, and G constitute the peripheral sector of the complex.

The protein localises to the cell inner membrane. It carries out the reaction a quinone + NADH + 5 H(+)(in) = a quinol + NAD(+) + 4 H(+)(out). Its function is as follows. NDH-1 shuttles electrons from NADH, via FMN and iron-sulfur (Fe-S) centers, to quinones in the respiratory chain. The immediate electron acceptor for the enzyme in this species is believed to be ubiquinone. Couples the redox reaction to proton translocation (for every two electrons transferred, four hydrogen ions are translocated across the cytoplasmic membrane), and thus conserves the redox energy in a proton gradient. In Aeromonas salmonicida (strain A449), this protein is NADH-quinone oxidoreductase subunit C/D.